The sequence spans 247 residues: 3-deoxy-manno-octulosonate cytidylyltransferase (247 aa).

Belongs to the KdsB family.

It is found in the cytoplasm. The catalysed reaction is 3-deoxy-alpha-D-manno-oct-2-ulosonate + CTP = CMP-3-deoxy-beta-D-manno-octulosonate + diphosphate. It functions in the pathway nucleotide-sugar biosynthesis; CMP-3-deoxy-D-manno-octulosonate biosynthesis; CMP-3-deoxy-D-manno-octulosonate from 3-deoxy-D-manno-octulosonate and CTP: step 1/1. Its pathway is bacterial outer membrane biogenesis; lipopolysaccharide biosynthesis. Activates KDO (a required 8-carbon sugar) for incorporation into bacterial lipopolysaccharide in Gram-negative bacteria. The protein is 3-deoxy-manno-octulosonate cytidylyltransferase of Methylobacterium sp. (strain 4-46).